Consider the following 824-residue polypeptide: Disintegrin and metalloproteinase domain-containing protein 8 (824 aa).

The signal sequence occupies residues 1-16 (MRGLGLWLLGAMMLPA). At 17-655 (IAPSRPWALM…EVHAASGSLP (639 aa)) the chain is on the extracellular side. N-linked (GlcNAc...) asparagine glycosylation is found at Asn67 and Asn91. The Peptidase M12B domain occupies 200-400 (RYVELYVVVD…PQSVCLANAP (201 aa)). 12 disulfides stabilise this stretch: Cys310-Cys395, Cys351-Cys379, Cys353-Cys362, Cys435-Cys457, Cys448-Cys454, Cys466-Cys486, Cys473-Cys503, Cys498-Cys508, Cys566-Cys613, Cys613-Cys623, Cys617-Cys629, and Cys631-Cys640. His334 is a binding site for Zn(2+). Glu335 is an active-site residue. Zn(2+)-binding residues include His338 and His344. Residues 408–494 (GPVCGNLFVE…ECPEDAFQEN (87 aa)) form the Disintegrin domain. The N-linked (GlcNAc...) asparagine glycan is linked to Asn436. In terms of domain architecture, EGF-like spans 609–641 (RSSNCSAQCHNHGVCNHKQECHCHAGWAPPHCA). N-linked (GlcNAc...) asparagine glycosylation is present at Asn612. The helical transmembrane segment at 656 to 676 (VFVVVVLVLLAVVLVTLAGII) threads the bilayer. Topologically, residues 677–824 (VYRKARSRIL…KQGAGAPTAP (148 aa)) are cytoplasmic. Disordered regions lie at residues 710–756 (VPAK…PVTV) and 776–824 (KPTF…PTAP). The segment covering 747 to 756 (RPPPAPPVTV) has biased composition (pro residues). The span at 788-804 (PGAGAANPGPAEGAVGP) shows a compositional bias: low complexity.

Interacts with FST3. Zn(2+) is required as a cofactor. As to expression, expressed on neutrophils and monocytes.

Its subcellular location is the membrane. In terms of biological role, possible involvement in extravasation of leukocytes. This is Disintegrin and metalloproteinase domain-containing protein 8 (ADAM8) from Homo sapiens (Human).